A 93-amino-acid chain; its full sequence is Serine rich endogenous peptide 6 (93 aa).

Positions 1-27 (MGTKCYSKLRYVVVLVLLLFVFPCSLS) are cleaved as a signal peptide. 2 short sequence motifs (SCOOP motif) span residues 48–62 (GIIA…APNI) and 73–87 (ISEA…GGGR). The disordered stretch occupies residues 52-93 (GSSPSGQAPNINNNYHGRRLMISEARPSKSKKGGGREPESPG). Over residues 53-66 (SSPSGQAPNINNNY) the composition is skewed to polar residues. 2 consecutive short sequence motifs (sxS motif essential for MIK2 binding) follow at residues 54–56 (SPS) and 79–81 (SKS).

Belongs to the serine rich endogenous peptide (SCOOP) phytocytokine family. In terms of assembly, interacts with MIK2 (via extracellular leucine-rich repeat domain); this interaction triggers the formation of complex between MIK2 and the BAK1/SERK3 and SERK4 coreceptors, and subsequent BAK1 activation by phosphorylation. Mostly expressed in seedlings shoots, and, to a lower extent, in roots.

The protein localises to the cell membrane. It localises to the secreted. Its subcellular location is the extracellular space. The protein resides in the apoplast. Brassicaceae-specific phytocytokine (plant endogenous peptide released into the apoplast) perceived by MIK2 in a BAK1/SERK3 and SERK4 coreceptors-dependent manner, that modulates various physiological and antimicrobial processes including growth prevention and reactive oxygen species (ROS) response regulation. Inhibits root growth. The polypeptide is Serine rich endogenous peptide 6 (Arabidopsis thaliana (Mouse-ear cress)).